The sequence spans 358 residues: Histidinol-phosphate aminotransferase (358 aa).

N6-(pyridoxal phosphate)lysine is present on lysine 217.

The protein belongs to the class-II pyridoxal-phosphate-dependent aminotransferase family. Histidinol-phosphate aminotransferase subfamily. In terms of assembly, homodimer. Requires pyridoxal 5'-phosphate as cofactor.

It catalyses the reaction L-histidinol phosphate + 2-oxoglutarate = 3-(imidazol-4-yl)-2-oxopropyl phosphate + L-glutamate. Its pathway is amino-acid biosynthesis; L-histidine biosynthesis; L-histidine from 5-phospho-alpha-D-ribose 1-diphosphate: step 7/9. The protein is Histidinol-phosphate aminotransferase of Ruminiclostridium cellulolyticum (strain ATCC 35319 / DSM 5812 / JCM 6584 / H10) (Clostridium cellulolyticum).